The following is a 92-amino-acid chain: Putative septation protein SpoVG (92 aa).

Belongs to the SpoVG family.

In terms of biological role, could be involved in septation. The polypeptide is Putative septation protein SpoVG (Thermoanaerobacter sp. (strain X514)).